A 158-amino-acid polypeptide reads, in one-letter code: Protein-export protein SecB (158 aa).

Belongs to the SecB family. In terms of assembly, homotetramer, a dimer of dimers. One homotetramer interacts with 1 SecA dimer.

It is found in the cytoplasm. Functionally, one of the proteins required for the normal export of preproteins out of the cell cytoplasm. It is a molecular chaperone that binds to a subset of precursor proteins, maintaining them in a translocation-competent state. It also specifically binds to its receptor SecA. The polypeptide is Protein-export protein SecB (Anaplasma phagocytophilum (strain HZ)).